A 230-amino-acid chain; its full sequence is 7-cyano-7-deazaguanine synthase (230 aa).

Leucine 10–alanine 20 is an ATP binding site. Zn(2+) contacts are provided by cysteine 191, cysteine 199, cysteine 202, and cysteine 205.

It belongs to the QueC family. It depends on Zn(2+) as a cofactor.

The enzyme catalyses 7-carboxy-7-deazaguanine + NH4(+) + ATP = 7-cyano-7-deazaguanine + ADP + phosphate + H2O + H(+). It participates in purine metabolism; 7-cyano-7-deazaguanine biosynthesis. Catalyzes the ATP-dependent conversion of 7-carboxy-7-deazaguanine (CDG) to 7-cyano-7-deazaguanine (preQ(0)). This is 7-cyano-7-deazaguanine synthase from Gloeothece citriformis (strain PCC 7424) (Cyanothece sp. (strain PCC 7424)).